The primary structure comprises 436 residues: Histidinol dehydrogenase (436 aa).

Residues serine 237, glutamine 259, and histidine 262 each coordinate substrate. Residues glutamine 259 and histidine 262 each coordinate Zn(2+). Active-site proton acceptor residues include glutamate 327 and histidine 328. Histidine 328, aspartate 361, glutamate 415, and histidine 420 together coordinate substrate. Position 361 (aspartate 361) interacts with Zn(2+). Histidine 420 is a binding site for Zn(2+).

It belongs to the histidinol dehydrogenase family. Zn(2+) is required as a cofactor.

The enzyme catalyses L-histidinol + 2 NAD(+) + H2O = L-histidine + 2 NADH + 3 H(+). It functions in the pathway amino-acid biosynthesis; L-histidine biosynthesis; L-histidine from 5-phospho-alpha-D-ribose 1-diphosphate: step 9/9. In terms of biological role, catalyzes the sequential NAD-dependent oxidations of L-histidinol to L-histidinaldehyde and then to L-histidine. The sequence is that of Histidinol dehydrogenase from Helicobacter hepaticus (strain ATCC 51449 / 3B1).